Here is a 553-residue protein sequence, read N- to C-terminus: Solute carrier family 22 member 12 (553 aa).

The helical transmembrane segment at 16–36 threads the bilayer; the sequence is FQLLQAVALVTPILWVTTQNM. Residues Asn-56, Asn-102, and Asn-107 are each glycosylated (N-linked (GlcNAc...) asparagine). The next 11 membrane-spanning stretches (helical) occupy residues 146-166, 182-202, 204-224, 232-252, 260-280, 351-371, 378-398, 407-427, 435-455, 466-486, and 495-515; these read PMAQ…CGHA, LVSV…YCLF, FLVA…LMEW, LMMT…GSVA, MLQL…WWLP, FISM…ALDL, IFLL…GSLL, LCQA…ILVP, SSLA…VTIF, MTAV…GPLV, and WLPL…ALLL. Phosphoserine is present on Ser-534.

This sequence belongs to the major facilitator (TC 2.A.1) superfamily. Organic cation transporter (TC 2.A.1.19) family. Interacts with PDZK1. In terms of processing, N-glycosylated. As to expression, expressed in the proximal tubular epithelial cells in kidney.

It localises to the apical cell membrane. The enzyme catalyses urate(out) + (S)-lactate(in) = urate(in) + (S)-lactate(out). It carries out the reaction nicotinate(in) + urate(out) = nicotinate(out) + urate(in). It catalyses the reaction urate(out) + n chloride(in) = urate(in) + n chloride(out). The catalysed reaction is orotate(out) + nicotinate(in) = orotate(in) + nicotinate(out). Electroneutral antiporter that translocates urate across the apical membrane of proximal tubular cells in exchange for monovalent organic or inorganic anions. Involved in renal reabsorption of urate and helps maintaining blood levels of uric acid. Mediates urate uptake by an exchange with organic anions such as (S)-lactate and nicotinate, and inorganic anion Cl(-). Other inorganic anions such as Br(-), I(-) and NO3(-) may also act as counteranions that exchange for urate. Also mediates orotate tubular uptake coupled with nicotinate efflux and to a lesser extent with lactate efflux, therefore displaying a potential role in orotate renal reabsorption. Orotate transport is Cl(-)-dependent. This is Solute carrier family 22 member 12 (Slc22a12) from Rattus norvegicus (Rat).